Consider the following 152-residue polypeptide: MEDEEVAESWEEAADSGEIDRRLEKKLKITQKESRKSKSPPKVPIVIQDDSVPSGPPPQIRILKRPATNGVLSNPNSTTRPAFPVKSLAQREAEYAEARKRILGSASPEEEQEKPILDRPTRISQPEDIRQPNNVIRQPLGPDGSQGFKQRR.

Disordered regions lie at residues Thr30–Lys86 and Lys100–Arg152. The 66-residue stretch at Lys42 to Ser107 folds into the SUZ domain. The segment covering Gly70 to Arg80 has biased composition (polar residues). The region spanning Glu111–Arg152 is the SUZ-C domain. Positions Glu113–Arg130 are enriched in basic and acidic residues.

Belongs to the SZRD1 family.

This chain is SUZ RNA-binding domain-containing (SZRD1), found in Gallus gallus (Chicken).